Consider the following 158-residue polypeptide: Large ribosomal subunit protein uL11 (158 aa).

Belongs to the universal ribosomal protein uL11 family. As to quaternary structure, part of the ribosomal stalk of the 50S ribosomal subunit. Interacts with L10 and the large rRNA to form the base of the stalk. L10 forms an elongated spine to which L12 dimers bind in a sequential fashion forming a multimeric L10(L12)X complex.

Its function is as follows. Forms part of the ribosomal stalk which helps the ribosome interact with GTP-bound translation factors. The sequence is that of Large ribosomal subunit protein uL11 from Methanocella arvoryzae (strain DSM 22066 / NBRC 105507 / MRE50).